The chain runs to 264 residues: Apolipoprotein A-I (264 aa).

A signal peptide spans 1–18; it reads MRGVLVTLAVLFLTGTQA. 2 repeat units span residues 67–88 and 89–110. Residues 67 to 264 are 10 X approximate tandem repeats; sequence LKLADNLDTL…FLDELQKSVA (198 aa). The 3; half-length repeat unit spans residues 111-121; the sequence is KDLEEVKEKIR. A run of 5 repeats spans residues 122 to 143, 144 to 165, 166 to 187, 188 to 209, and 210 to 231. A 9; half-length repeat occupies 232–242; sequence PLVQEFRERLT. Repeat unit 10 spans residues 243–264; sequence PYAENLKNRLISFLDELQKSVA.

Belongs to the apolipoprotein A1/A4/E family. As to quaternary structure, homodimer. Major protein of plasma HDL, also found in chylomicrons.

It localises to the secreted. Functionally, participates in the reverse transport of cholesterol from tissues to the liver for excretion by promoting cholesterol efflux from tissues and by acting as a cofactor for the lecithin cholesterol acyltransferase (LCAT). The polypeptide is Apolipoprotein A-I (APOA1) (Gallus gallus (Chicken)).